A 260-amino-acid polypeptide reads, in one-letter code: Carbonic anhydrase 3 (260 aa).

Alanine 2 is modified (N-acetylalanine). Residues 3–259 (KEWGYADHNG…IKGRIVKASF (257 aa)) enclose the Alpha-carbonic anhydrase domain. A phosphoserine mark is found at serine 29, serine 43, serine 50, and serine 55. Residues 64-67 (KTCR) form an involved in proton transfer region. Residue threonine 73 is modified to Phosphothreonine. Zn(2+) is bound by residues histidine 94, histidine 96, and histidine 119. Tyrosine 127 carries the phosphotyrosine modification. Threonine 176 is subject to Phosphothreonine. An S-glutathionyl cysteine mark is found at cysteine 182 and cysteine 187. 198–199 (TT) lines the substrate pocket. The residue at position 216 (threonine 216) is a Phosphothreonine. The residue at position 219 (serine 219) is a Phosphoserine.

Belongs to the alpha-carbonic anhydrase family. Requires Zn(2+) as cofactor. In terms of processing, S-thiolated both by thiol-disulfide exchange with glutathione disulfide and by oxyradical-initiated S-thiolation with reduced glutathione. S-glutathionylated in hepatocytes under oxidative stress.

Its subcellular location is the cytoplasm. It catalyses the reaction hydrogencarbonate + H(+) = CO2 + H2O. With respect to regulation, inhibited by acetazolamide. Its function is as follows. Reversible hydration of carbon dioxide. This is Carbonic anhydrase 3 from Sus scrofa (Pig).